We begin with the raw amino-acid sequence, 176 residues long: Large ribosomal subunit protein uL6 (176 aa).

This sequence belongs to the universal ribosomal protein uL6 family. In terms of assembly, part of the 50S ribosomal subunit.

In terms of biological role, this protein binds to the 23S rRNA, and is important in its secondary structure. It is located near the subunit interface in the base of the L7/L12 stalk, and near the tRNA binding site of the peptidyltransferase center. In Lactobacillus delbrueckii subsp. bulgaricus (strain ATCC 11842 / DSM 20081 / BCRC 10696 / JCM 1002 / NBRC 13953 / NCIMB 11778 / NCTC 12712 / WDCM 00102 / Lb 14), this protein is Large ribosomal subunit protein uL6.